Reading from the N-terminus, the 299-residue chain is MSDEEIDISTALNNKTTPKKKSLKRNSNSQEGYESPEEREIVYPSVFGAIGTPMAKSDNAKEWDEWKEKERKKDKAEWKRYLRSKWDMTQGHLPLVSDSEFLKGRKEHKEYNSKARMDILDGLDEVNEGFFNCGKGAAMNIRYNDKNVSKKGAKKFVATVETAMKKAGNPTMEQMMTDDLDEDEARAEAEWERQREQRKLASRAYDAAMDEREDDAKYVPWDEYCQEMEELGKELKIGEKHYKKWLEKKMDENKVTHKFNAYQLDLKCLDEDAFSNKKSLKSVVRNVQKFYRKMREPKK.

A disordered region spans residues Met-1–Glu-38.

Expressed in mature sperm.

It is found in the cytoplasm. It localises to the perinuclear region. Functionally, paternally sperm-supplied factor required for embryogenesis. Plays a role in preventing polyspermy possibly by promoting the formation of a continuous and cohesive eggshell chitin layer. In Caenorhabditis elegans, this protein is Spermatocyte protein spe-11 (spe-11).